We begin with the raw amino-acid sequence, 141 residues long: Vesicle-associated membrane protein 4 (141 aa).

The interval 1 to 51 (MPPKFKRHLNDDDVTGSVKSERRNLLEDDSDEEEDFFLRGPSGPRFGPRND) is disordered. The Cytoplasmic segment spans residues 1–115 (MPPKFKRHLN…RRQMWWRGCK (115 aa)). Phosphoserine is present on residues Ser-17 and Ser-30. The 61-residue stretch at 52–112 (KIKHVQNQVD…KQLRRQMWWR (61 aa)) folds into the v-SNARE coiled-coil homology domain. The chain crosses the membrane as a helical; Anchor for type IV membrane protein span at residues 116 to 136 (IKAIMALVAVILLLVIIILIV). Residues 137 to 141 (VKYRT) lie on the Vesicular side of the membrane.

This sequence belongs to the synaptobrevin family. Identified in a complex containing STX6, STX12, VAMP4 and VTI1A. Interacts with BAIAP3; this interaction is increased in the presence of calcium.

The protein localises to the golgi apparatus. It localises to the trans-Golgi network membrane. Functionally, involved in the pathway that functions to remove an inhibitor (probably synaptotagmin-4) of calcium-triggered exocytosis during the maturation of secretory granules. May be a marker for this sorting pathway that is critical for remodeling the secretory response of granule. The sequence is that of Vesicle-associated membrane protein 4 (VAMP4) from Bos taurus (Bovine).